The sequence spans 172 residues: Adenine phosphoribosyltransferase (172 aa).

The protein belongs to the purine/pyrimidine phosphoribosyltransferase family. As to quaternary structure, homodimer.

It is found in the cytoplasm. The enzyme catalyses AMP + diphosphate = 5-phospho-alpha-D-ribose 1-diphosphate + adenine. Its pathway is purine metabolism; AMP biosynthesis via salvage pathway; AMP from adenine: step 1/1. Catalyzes a salvage reaction resulting in the formation of AMP, that is energically less costly than de novo synthesis. The polypeptide is Adenine phosphoribosyltransferase (Picosynechococcus sp. (strain ATCC 27264 / PCC 7002 / PR-6) (Agmenellum quadruplicatum)).